A 610-amino-acid chain; its full sequence is Phosphoenolpyruvate carboxykinase [GTP] (610 aa).

Substrate is bound by residues R82 and 221–223; that span reads YGG. Mn(2+) is bound by residues K230 and H250. Residue S272 participates in substrate binding. 273 to 278 is a GTP binding site; it reads ACGKTN. C274 is a catalytic residue. D297 contributes to the Mn(2+) binding site. 387 to 389 contacts substrate; that stretch reads NSR. GTP-binding positions include R389, R420, and 515–518; that span reads FGDN.

This sequence belongs to the phosphoenolpyruvate carboxykinase [GTP] family. As to quaternary structure, monomer. It depends on Mn(2+) as a cofactor.

It localises to the cytoplasm. The catalysed reaction is oxaloacetate + GTP = phosphoenolpyruvate + GDP + CO2. It participates in carbohydrate biosynthesis; gluconeogenesis. Functionally, catalyzes the conversion of oxaloacetate (OAA) to phosphoenolpyruvate (PEP), the rate-limiting step in the metabolic pathway that produces glucose from lactate and other precursors derived from the citric acid cycle. This is Phosphoenolpyruvate carboxykinase [GTP] from Corynebacterium glutamicum (strain R).